Reading from the N-terminus, the 311-residue chain is R2-like ligand binding oxidase (311 aa).

The Mn(2+) site is built by Glu-68, Glu-101, and His-104. Positions 71–162 (VTQDIQPFMA…AAQVRASVTY (92 aa)) form a cross-link, 3-(O4'-tyrosyl)-valine (Val-Tyr). Glu-101 lines the Fe cation pocket. The Fe cation site is built by Glu-167, Glu-202, and His-205.

Belongs to the ribonucleoside diphosphate reductase small chain family. R2-like ligand binding oxidase subfamily. Homodimer. Requires Fe cation as cofactor. Mn(2+) serves as cofactor.

Functionally, probable oxidase that might be involved in lipid metabolism. This is R2-like ligand binding oxidase from Mycolicibacterium paratuberculosis (strain ATCC BAA-968 / K-10) (Mycobacterium paratuberculosis).